The primary structure comprises 78 residues: Broad mercury transporter MerE (78 aa).

A run of 2 helical transmembrane segments spans residues 19–39 (LWGA…AAVL) and 47–67 (FLGE…VLAV).

It localises to the cell inner membrane. In terms of biological role, broad mercury transporter that mediates the transport of both CH(3)Hg(I) and Hg(II) across the membrane. The polypeptide is Broad mercury transporter MerE (Shigella flexneri).